Reading from the N-terminus, the 352-residue chain is MSASTTATLRHDWTLAEVRALFVQPFNDLLFQAQTLHRAHFDANRVQVSTLLSIKTGACPEDCKYCPQSGHYNTGLEKEKLLEVQKVLEEAARAKSIGSTRFCMGAAWKHPSAKDMPYVLEMVKGVKAMGLETCMTLGRLDQEQTEALATAGLDYYNHNLDTSPEFYGSIITTRTYGERLQTLAYVRDAGMKICSGGILGMGESLDDRAGLLIQLANLPEHPESVPINMLVKVAGTPLENAEDVDPFDFIRMLAVARILMPQSHVRLSAGREAMNEQMQALAFFAGANSIFYGDKLLTTANPQADKDMLLFSRLGIKPEAGEGHADEVHQAAIEQALVEQQSSAMFYDAASA.

Positions 44–262 constitute a Radical SAM core domain; it reads NRVQVSTLLS…LAVARILMPQ (219 aa). Residues Cys59, Cys63, and Cys66 each coordinate [4Fe-4S] cluster. Cys103, Cys134, Cys194, and Arg266 together coordinate [2Fe-2S] cluster.

It belongs to the radical SAM superfamily. Biotin synthase family. In terms of assembly, homodimer. The cofactor is [4Fe-4S] cluster. Requires [2Fe-2S] cluster as cofactor.

The enzyme catalyses (4R,5S)-dethiobiotin + (sulfur carrier)-SH + 2 reduced [2Fe-2S]-[ferredoxin] + 2 S-adenosyl-L-methionine = (sulfur carrier)-H + biotin + 2 5'-deoxyadenosine + 2 L-methionine + 2 oxidized [2Fe-2S]-[ferredoxin]. It functions in the pathway cofactor biosynthesis; biotin biosynthesis; biotin from 7,8-diaminononanoate: step 2/2. Its function is as follows. Catalyzes the conversion of dethiobiotin (DTB) to biotin by the insertion of a sulfur atom into dethiobiotin via a radical-based mechanism. The chain is Biotin synthase from Pseudomonas syringae pv. tomato (strain ATCC BAA-871 / DC3000).